We begin with the raw amino-acid sequence, 374 residues long: Transcription factor NF-E2 45 kDa subunit (374 aa).

Disordered stretches follow at residues 1-21 (MSPC…IPEP) and 40-61 (LNAP…GPPP). Positions 1–83 (MSPCPPQQSR…PGFPLPAPPY (83 aa)) are required for interaction with MAPK8. Positions 1–207 (MSPCPPQQSR…PPAETPLALE (207 aa)) are transactivation domain. A compositionally biased stretch (pro residues) spans 48-61 (FEPPAPVPYPGPPP). Short sequence motifs (PXY motif) lie at residues 61 to 65 (PPPSY) and 79 to 83 (PAPPY). The tract at residues 132-165 (LSAGPSKPQEDPESDSGLSLNYSDAESLELEGTE) is disordered. At serine 158 the chain carries Phosphoserine; by MAPK8. Serine 171 is modified (phosphoserine; by PKA). Positions 207 to 227 (EPSSGPVRAKPTARGEAGSRD) are disordered. The bZIP domain occupies 267 to 330 (LVRDIRRRGK…EVMRQQLTDL (64 aa)). Residues 269–288 (RDIRRRGKNKVAAQNCRKRK) form a basic motif region. The interval 292–299 (IVQLEREL) is leucine-zipper. Lysine 369 participates in a covalent cross-link: Glycyl lysine isopeptide (Lys-Gly) (interchain with G-Cter in SUMO); alternate. Lysine 369 participates in a covalent cross-link: Glycyl lysine isopeptide (Lys-Gly) (interchain with G-Cter in SUMO1); alternate.

Belongs to the bZIP family. CNC subfamily. Homodimer; can bind DNA as a homodimer. Erythroid transcription activator nuclear factor erythroid-derived 2 (NF-E2), composed of a heterodimer of NFE2 and MAFK, possesses transactivation activity on beta-globin. Also forms high affinity heterodimer with MAFG; the interaction promotes erythropoiesis. Interacts (via the PXY motif 1) with ITCH (via the WW 1 domain); the interaction promotes 'Lys63'-linked ubiquitination of NFE2, translocates it to the cytoplasm and inhibits its transactivation activity. Interacts with KMT2D/MLL2; the interaction promotes transactivation of the beta-globin locus. Interacts with MAPK8 (phosphorylated form); the interaction leads to phosphorylation of NFE2 in undifferentiated cells. In terms of processing, phosphorylated on serine residues. In undifferentiated erythrocytes, phosphorylated by MAPK8 which then leads to ubiquitination and protein degradation. Post-translationally, sumoylated. Sumoylation is required for translocation to nuclear bodies PODs, anchoring to the gene loci, and transactivation of the beta-globin gene. Ubiquitinated mainly by 'Lys63'-linked ubiquitin. Polyubiquitination with 'Lys63'-linked ubiquitin by ITCH retains NFE2 in the cytoplasm preventing its transactivation activity. In undifferentiated erythrocyte, is ubiquitinated after MAPK8-mediatd phosphorylation leading to protein degradation.

The protein localises to the nucleus. It is found in the cytoplasm. Functionally, component of the NF-E2 complex essential for regulating erythroid and megakaryocytic maturation and differentiation. Binds to the hypersensitive site 2 (HS2) of the beta-globin control region (LCR). This subunit (NFE2) recognizes the TCAT/C sequence of the AP-1-like core palindrome present in a number of erythroid and megakaryocytic gene promoters. Requires MAFK or other small MAF proteins for binding to the NF-E2 motif. May play a role in all aspects of hemoglobin production from globin and heme synthesis to procurement of iron. The protein is Transcription factor NF-E2 45 kDa subunit (NFE2) of Bos taurus (Bovine).